Consider the following 845-residue polypeptide: Poly(A) RNA polymerase gld-4 (845 aa).

A disordered region spans residues 1–55; it reads MNEDSRLSSSQQPSTSTPRSSIPSTMNSDEPNTCRRLSQSQEQPSTSRTCKSETP. A compositionally biased stretch (low complexity) spans 7–25; it reads LSSSQQPSTSTPRSSIPST. Over residues 26 to 49 the composition is skewed to polar residues; that stretch reads MNSDEPNTCRRLSQSQEQPSTSRT. Residues D139 and D141 each coordinate Mg(2+). One can recognise a PAP-associated domain in the interval 276 to 335; that stretch reads NLGHLLLRFLELYSLEFNFEEMGISPGQCCYIPKSASGARYGHKQAQPGNLALEDPLLTA. A compositionally biased stretch (basic and acidic residues) spans 482 to 506; that stretch reads KSLEKMPACDDNKKEEELVATRETD. Disordered regions lie at residues 482–733 and 788–845; these read KSLE…SEEP and NALT…RLQR. Over residues 535 to 551 the composition is skewed to low complexity; the sequence is TSTQSVNTSATVSTAAS. 2 stretches are compositionally biased toward polar residues: residues 561–571 and 579–588; these read PGLSSSMGNQS and GINNRNNSAV. Residues 605 to 620 show a composition bias toward basic and acidic residues; sequence RESKRTQTTSEDKMQD. Positions 643-653 are enriched in basic residues; that stretch reads SHKHRNAHPQR. Polar residues-rich tracts occupy residues 654–666, 695–732, 788–805, and 819–828; these read QRPSIRNLSQGSD, RQQTNTRNCGPTNNIPYDSFRSQNKNSTLDGSNNSSEE, NALTTSPMTPPSAHTSMQ, and DNNSATSSTD.

Interacts with gls-1 isoform C. The cofactor is Mg(2+). Requires Mn(2+) as cofactor. Germline-specific.

It localises to the cytoplasm. It is found in the cytoplasmic granule. The protein resides in the perinuclear region. The enzyme catalyses RNA(n) + ATP = RNA(n)-3'-adenine ribonucleotide + diphosphate. Cytoplasmic poly(A) RNA polymerase that adds successive AMP monomers to the 3'-end of specific RNAs, forming a poly(A) tail. The enzymatic activity is enhanced by its interaction with gls-1. Required, together with gld-2, for early meiotic progression in male and female germ cells and for gld-1 protein accumulation in the hermaphrodite germline. In the germline, forms a complex with gls-1 which directly binds to gld-1 mRNA and prevents its degradation. The polypeptide is Poly(A) RNA polymerase gld-4 (Caenorhabditis elegans).